A 485-amino-acid chain; its full sequence is Arginine biosynthesis bifunctional protein ArgJ, mitochondrial (485 aa).

Residues Thr-185, Lys-214, Thr-225, and Glu-315 each contribute to the substrate site. Catalysis depends on Thr-225, which acts as the Nucleophile.

Belongs to the ArgJ family. As to quaternary structure, heterodimer of an alpha and a beta chain. The alpha and beta chains are autoproteolytically processed from a single precursor protein within the mitochondrion.

It is found in the mitochondrion matrix. The catalysed reaction is N(2)-acetyl-L-ornithine + L-glutamate = N-acetyl-L-glutamate + L-ornithine. It catalyses the reaction L-glutamate + acetyl-CoA = N-acetyl-L-glutamate + CoA + H(+). It functions in the pathway amino-acid biosynthesis; L-arginine biosynthesis; L-ornithine and N-acetyl-L-glutamate from L-glutamate and N(2)-acetyl-L-ornithine (cyclic): step 1/1. The protein operates within amino-acid biosynthesis; L-arginine biosynthesis; N(2)-acetyl-L-ornithine from L-glutamate: step 1/4. Catalyzes two activities which are involved in the cyclic version of arginine biosynthesis: the synthesis of acetylglutamate from glutamate and acetyl-CoA, and of ornithine by transacetylation between acetylornithine and glutamate. This is Arginine biosynthesis bifunctional protein ArgJ, mitochondrial from Penicillium rubens (strain ATCC 28089 / DSM 1075 / NRRL 1951 / Wisconsin 54-1255) (Penicillium chrysogenum).